Reading from the N-terminus, the 162-residue chain is Class I hydrophobin dewC (162 aa).

The first 21 residues, 1–21 (MQFTIASLIATAVLGLQMASA), serve as a signal peptide directing secretion. Disulfide bonds link cysteine 43–cysteine 119, cysteine 50–cysteine 113, cysteine 51–cysteine 90, and cysteine 120–cysteine 156.

The protein belongs to the fungal hydrophobin family. Self-assembles to form functional amyloid fibrils called rodlets. Self-assembly into fibrillar rodlets occurs spontaneously at hydrophobic:hydrophilic interfaces and the rodlets further associate laterally to form amphipathic monolayers.

The protein resides in the secreted. The protein localises to the spore wall. Its function is as follows. Aerial growth, conidiation, and dispersal of filamentous fungi in the environment rely upon a capability of their secreting small amphipathic proteins called hydrophobins (HPBs) with low sequence identity. Class I can self-assemble into an outermost layer of rodlet bundles on aerial cell surfaces, conferring cellular hydrophobicity that supports fungal growth, development and dispersal; whereas Class II form highly ordered films at water-air interfaces through intermolecular interactions but contribute nothing to the rodlet structure. DewC is a class I hydrophobin that contributes to the hydrophobicity of the spore surface. In Emericella nidulans (strain FGSC A4 / ATCC 38163 / CBS 112.46 / NRRL 194 / M139) (Aspergillus nidulans), this protein is Class I hydrophobin dewC.